The chain runs to 571 residues: Peptide-N4-(N-acetyl-beta-glucosaminyl)asparagine amidase A (571 aa).

Residues asparagine 121, asparagine 143, asparagine 197, asparagine 241, asparagine 318, asparagine 367, asparagine 390, asparagine 423, asparagine 457, asparagine 481, asparagine 524, and asparagine 529 are each glycosylated (N-linked (GlcNAc...) asparagine).

In terms of assembly, heterodimer of a large and a small chain. Post-translationally, is highly glycosylated and is largly resistant against self-deglycosylation.

It carries out the reaction Hydrolysis of an N(4)-(acetyl-beta-D-glucosaminyl)asparagine residue in which the glucosamine residue may be further glycosylated, to yield a (substituted) N-acetyl-beta-D-glucosaminylamine and a peptide containing an aspartate residue.. This is Peptide-N4-(N-acetyl-beta-glucosaminyl)asparagine amidase A from Prunus dulcis (Almond).